The chain runs to 202 residues: ATP-dependent Clp protease proteolytic subunit (202 aa).

The active-site Nucleophile is the S106. Residue H131 is part of the active site.

The protein belongs to the peptidase S14 family. Fourteen ClpP subunits assemble into 2 heptameric rings which stack back to back to give a disk-like structure with a central cavity, resembling the structure of eukaryotic proteasomes.

The protein resides in the cytoplasm. It catalyses the reaction Hydrolysis of proteins to small peptides in the presence of ATP and magnesium. alpha-casein is the usual test substrate. In the absence of ATP, only oligopeptides shorter than five residues are hydrolyzed (such as succinyl-Leu-Tyr-|-NHMec, and Leu-Tyr-Leu-|-Tyr-Trp, in which cleavage of the -Tyr-|-Leu- and -Tyr-|-Trp bonds also occurs).. Functionally, cleaves peptides in various proteins in a process that requires ATP hydrolysis. Has a chymotrypsin-like activity. Plays a major role in the degradation of misfolded proteins. This is ATP-dependent Clp protease proteolytic subunit from Albidiferax ferrireducens (strain ATCC BAA-621 / DSM 15236 / T118) (Rhodoferax ferrireducens).